Reading from the N-terminus, the 558-residue chain is Ribonuclease Y (558 aa).

Residues 3–23 traverse the membrane as a helical segment; it reads VLSILLILVAVGVGIFVGRQF. Residues 248 to 311 enclose the KH domain; sequence TTTTVELPSN…EIAKEALQRL (64 aa). The region spanning 374–467 is the HD domain; that stretch reads VLLHSKEVAY…VCAADALSAA (94 aa).

It belongs to the RNase Y family.

Its subcellular location is the cell membrane. In terms of biological role, endoribonuclease that initiates mRNA decay. In Aquifex aeolicus (strain VF5), this protein is Ribonuclease Y.